The primary structure comprises 447 residues: N-succinylarginine dihydrolase (447 aa).

Residues 19–28, N110, and 137–138 each bind substrate; these read AGLSFGNVAS and HR. The active site involves E174. Substrate is bound at residue R214. The active site involves H250. 2 residues coordinate substrate: D252 and N364. Catalysis depends on C370, which acts as the Nucleophile.

The protein belongs to the succinylarginine dihydrolase family. As to quaternary structure, homodimer.

It carries out the reaction N(2)-succinyl-L-arginine + 2 H2O + 2 H(+) = N(2)-succinyl-L-ornithine + 2 NH4(+) + CO2. It participates in amino-acid degradation; L-arginine degradation via AST pathway; L-glutamate and succinate from L-arginine: step 2/5. In terms of biological role, catalyzes the hydrolysis of N(2)-succinylarginine into N(2)-succinylornithine, ammonia and CO(2). The chain is N-succinylarginine dihydrolase from Idiomarina loihiensis (strain ATCC BAA-735 / DSM 15497 / L2-TR).